Consider the following 376-residue polypeptide: Queuine tRNA-ribosyltransferase (376 aa).

Catalysis depends on D89, which acts as the Proton acceptor. Residues D89–F93, D143, Q194, and G221 each bind substrate. The tract at residues G252–N258 is RNA binding. Catalysis depends on D271, which acts as the Nucleophile. An RNA binding; important for wobble base 34 recognition region spans residues A276–R280. Zn(2+) contacts are provided by C309, C311, C314, and H340.

Belongs to the queuine tRNA-ribosyltransferase family. As to quaternary structure, homodimer. Within each dimer, one monomer is responsible for RNA recognition and catalysis, while the other monomer binds to the replacement base PreQ1. Requires Zn(2+) as cofactor.

It catalyses the reaction 7-aminomethyl-7-carbaguanine + guanosine(34) in tRNA = 7-aminomethyl-7-carbaguanosine(34) in tRNA + guanine. It participates in tRNA modification; tRNA-queuosine biosynthesis. Its function is as follows. Catalyzes the base-exchange of a guanine (G) residue with the queuine precursor 7-aminomethyl-7-deazaguanine (PreQ1) at position 34 (anticodon wobble position) in tRNAs with GU(N) anticodons (tRNA-Asp, -Asn, -His and -Tyr). Catalysis occurs through a double-displacement mechanism. The nucleophile active site attacks the C1' of nucleotide 34 to detach the guanine base from the RNA, forming a covalent enzyme-RNA intermediate. The proton acceptor active site deprotonates the incoming PreQ1, allowing a nucleophilic attack on the C1' of the ribose to form the product. After dissociation, two additional enzymatic reactions on the tRNA convert PreQ1 to queuine (Q), resulting in the hypermodified nucleoside queuosine (7-(((4,5-cis-dihydroxy-2-cyclopenten-1-yl)amino)methyl)-7-deazaguanosine). In Clostridium botulinum (strain Kyoto / Type A2), this protein is Queuine tRNA-ribosyltransferase.